A 267-amino-acid polypeptide reads, in one-letter code: Phosphate import ATP-binding protein PstB 2 (267 aa).

Positions 21 to 262 (LSTKDLHVYY…AKLQSTSDYV (242 aa)) constitute an ABC transporter domain. 53–60 (GPSGCGKS) is a binding site for ATP.

The protein belongs to the ABC transporter superfamily. Phosphate importer (TC 3.A.1.7) family. The complex is composed of two ATP-binding proteins (PstB), two transmembrane proteins (PstC and PstA) and a solute-binding protein (PstS).

The protein localises to the cell membrane. It carries out the reaction phosphate(out) + ATP + H2O = ADP + 2 phosphate(in) + H(+). In terms of biological role, part of the ABC transporter complex PstSACB involved in phosphate import. Responsible for energy coupling to the transport system. The protein is Phosphate import ATP-binding protein PstB 2 of Streptococcus mutans serotype c (strain ATCC 700610 / UA159).